The sequence spans 310 residues: Homoserine O-acetyltransferase (310 aa).

The Acyl-thioester intermediate role is filled by cysteine 142. The substrate site is built by lysine 163 and serine 192. Histidine 235 (proton acceptor) is an active-site residue. Residue glutamate 237 is part of the active site. Substrate is bound at residue arginine 249.

It belongs to the MetA family.

The protein localises to the cytoplasm. The catalysed reaction is L-homoserine + acetyl-CoA = O-acetyl-L-homoserine + CoA. It functions in the pathway amino-acid biosynthesis; L-methionine biosynthesis via de novo pathway; O-acetyl-L-homoserine from L-homoserine: step 1/1. Functionally, transfers an acetyl group from acetyl-CoA to L-homoserine, forming acetyl-L-homoserine. The polypeptide is Homoserine O-acetyltransferase (Lachnospira eligens (strain ATCC 27750 / DSM 3376 / VPI C15-48 / C15-B4) (Eubacterium eligens)).